The sequence spans 349 residues: Green-sensitive opsin-2 (349 aa).

At 1 to 36 the chain is on the extracellular side; sequence MNGTEGNNFYIPMSNRTGLVRSPYEYTQYYLADPWQ. N-linked (GlcNAc...) asparagine glycans are attached at residues asparagine 2 and asparagine 15. The chain crosses the membrane as a helical span at residues 37–61; that stretch reads FKALAFYMFFLICFGLPINVLTLLV. Residues 62–73 lie on the Cytoplasmic side of the membrane; sequence TAQHKKLRQPLN. The helical transmembrane segment at 74-99 threads the bilayer; sequence YILVNLAFAGTIMAFFGFTVTFYCSI. The Extracellular segment spans residues 100 to 113; that stretch reads NGYMALGPTGCAIE. The cysteines at positions 110 and 187 are disulfide-linked. A helical transmembrane segment spans residues 114–133; the sequence is GFFATLGGQVALWSLVVLAI. Topologically, residues 134–152 are cytoplasmic; it reads ERYIVVCKPMGSFKFSSNH. The helical transmembrane segment at 153–176 threads the bilayer; the sequence is AMAGIAFTWVMASSCAVPPLFGWS. The Extracellular segment spans residues 177-202; sequence RYIPEGMQTSCGPDYYTLNPEFNNES. A glycan (N-linked (GlcNAc...) asparagine) is linked at asparagine 200. The chain crosses the membrane as a helical span at residues 203 to 230; it reads YVLYMFSCHFCVPVTTIFFTYGSLVCTV. The Cytoplasmic segment spans residues 231–252; sequence KAAAAQQQESESTQKAEREVTR. A helical transmembrane segment spans residues 253 to 276; it reads MVILMVLGFLVAWVPYASFAAWIF. The Extracellular segment spans residues 277–284; that stretch reads FNRGAAFS. Residues 285–309 form a helical membrane-spanning segment; it reads AQAMAIPAFFSKASALFNPIIYVLL. Position 296 is an N6-(retinylidene)lysine (lysine 296). The Cytoplasmic segment spans residues 310-349; the sequence is NKQFRSCMLNTLFCGKSPLGDDESSSVSTSKTEVSSVSPA. A disordered region spans residues 328–349; it reads LGDDESSSVSTSKTEVSSVSPA. The span at 334–349 shows a compositional bias: low complexity; sequence SSVSTSKTEVSSVSPA.

Belongs to the G-protein coupled receptor 1 family. Opsin subfamily. Post-translationally, phosphorylated on some or all of the serine and threonine residues present in the C-terminal region.

Its subcellular location is the membrane. Visual pigments are the light-absorbing molecules that mediate vision. They consist of an apoprotein, opsin, covalently linked to cis-retinal. The polypeptide is Green-sensitive opsin-2 (opn1mw2) (Danio rerio (Zebrafish)).